The sequence spans 452 residues: Sesamin methylene transferase (452 aa).

The protein belongs to the GcvT family. As to quaternary structure, homotrimer.

The enzyme catalyses (+)-sesamin + (6S)-5,6,7,8-tetrahydrofolyl-(gamma-L-Glu)(n) = (+)-sesamin monocatechol + (6R)-5,10-methylenetetrahydrofolyl-(gamma-L-Glu)(n). It catalyses the reaction (+)-sesamin monocatechol + (6S)-5,6,7,8-tetrahydrofolyl-(gamma-L-Glu)(n) = (+)-sesamin dicatechol + (6R)-5,10-methylenetetrahydrofolyl-(gamma-L-Glu)(n). Functionally, converts sesamin into sesamin mono- and di-catechol. Catalyzes a ring cleavage to transfer the methylene group to tetrahydrofolate (THF). Also active with (+)-episesamin, (-)-asarinin, sesaminol, (+)-sesamolin and piperine. The polypeptide is Sesamin methylene transferase (Sinomonas sp. (strain No.22)).